The chain runs to 330 residues: Aspartate--ammonia ligase (330 aa).

The protein belongs to the class-II aminoacyl-tRNA synthetase family. AsnA subfamily.

It is found in the cytoplasm. The enzyme catalyses L-aspartate + NH4(+) + ATP = L-asparagine + AMP + diphosphate + H(+). The protein operates within amino-acid biosynthesis; L-asparagine biosynthesis; L-asparagine from L-aspartate (ammonia route): step 1/1. The polypeptide is Aspartate--ammonia ligase (Streptococcus pyogenes serotype M6 (strain ATCC BAA-946 / MGAS10394)).